The following is a 340-amino-acid chain: Adenosine kinase (340 aa).

Aspartate 293 is an active-site residue.

The protein belongs to the carbohydrate kinase PfkB family. Monomer. Mg(2+) serves as cofactor.

The catalysed reaction is adenosine + ATP = AMP + ADP + H(+). It functions in the pathway purine metabolism; AMP biosynthesis via salvage pathway; AMP from adenosine: step 1/1. Its function is as follows. ATP dependent phosphorylation of adenosine and other related nucleoside analogs to monophosphate derivatives. The chain is Adenosine kinase (adk) from Dictyostelium discoideum (Social amoeba).